We begin with the raw amino-acid sequence, 427 residues long: Serine--tRNA ligase (427 aa).

233 to 235 (TAE) provides a ligand contact to L-serine. Residue 264 to 266 (RSE) participates in ATP binding. E287 contributes to the L-serine binding site. ATP is bound at residue 351–354 (EISS). Residue S386 coordinates L-serine.

Belongs to the class-II aminoacyl-tRNA synthetase family. Type-1 seryl-tRNA synthetase subfamily. As to quaternary structure, homodimer. The tRNA molecule binds across the dimer.

Its subcellular location is the cytoplasm. The enzyme catalyses tRNA(Ser) + L-serine + ATP = L-seryl-tRNA(Ser) + AMP + diphosphate + H(+). The catalysed reaction is tRNA(Sec) + L-serine + ATP = L-seryl-tRNA(Sec) + AMP + diphosphate + H(+). It participates in aminoacyl-tRNA biosynthesis; selenocysteinyl-tRNA(Sec) biosynthesis; L-seryl-tRNA(Sec) from L-serine and tRNA(Sec): step 1/1. In terms of biological role, catalyzes the attachment of serine to tRNA(Ser). Is also able to aminoacylate tRNA(Sec) with serine, to form the misacylated tRNA L-seryl-tRNA(Sec), which will be further converted into selenocysteinyl-tRNA(Sec). The protein is Serine--tRNA ligase of Thiobacillus denitrificans (strain ATCC 25259 / T1).